A 366-amino-acid chain; its full sequence is E3 ubiquitin-protein ligase SINA-like 1 (366 aa).

The interval M1–G37 is disordered. The RING-type; degenerate zinc finger occupies C56–S92. Positions V106–L354 are SBD. The segment at A109–K232 adopts an SIAH-type; degenerate zinc-finger fold. Positions 114, 186, 198, 202, 209, 214, 226, and 231 each coordinate Zn(2+).

The protein belongs to the SINA (Seven in absentia) family.

It catalyses the reaction S-ubiquitinyl-[E2 ubiquitin-conjugating enzyme]-L-cysteine + [acceptor protein]-L-lysine = [E2 ubiquitin-conjugating enzyme]-L-cysteine + N(6)-ubiquitinyl-[acceptor protein]-L-lysine.. Its pathway is protein modification; protein ubiquitination. Functionally, E3 ubiquitin-protein ligase that mediates ubiquitination and subsequent proteasomal degradation of target proteins. E3 ubiquitin ligases accept ubiquitin from an E2 ubiquitin-conjugating enzyme in the form of a thioester and then directly transfers the ubiquitin to targeted substrates. It probably triggers the ubiquitin-mediated degradation of different substrates. This is E3 ubiquitin-protein ligase SINA-like 1 from Arabidopsis thaliana (Mouse-ear cress).